The primary structure comprises 344 residues: uncharacterized protein (344 aa).

The first 20 residues, 1-20 (MEIRIMLFILMMMVMPVSYA), serve as a signal peptide directing secretion.

This sequence belongs to the fimbrial protein family.

Part of the yehABCD fimbrial operon. Could contribute to adhesion to various surfaces in specific environmental niches. This is an uncharacterized protein from Escherichia coli (strain K12).